Here is a 146-residue protein sequence, read N- to C-terminus: UPF0260 protein Ssed_2516 (146 aa).

This sequence belongs to the UPF0260 family.

The sequence is that of UPF0260 protein Ssed_2516 from Shewanella sediminis (strain HAW-EB3).